The following is a 315-amino-acid chain: Homoserine kinase (315 aa).

ATP is bound at residue 97–107 (PPARGLGSSAT).

This sequence belongs to the GHMP kinase family. Homoserine kinase subfamily.

The protein resides in the cytoplasm. It carries out the reaction L-homoserine + ATP = O-phospho-L-homoserine + ADP + H(+). It functions in the pathway amino-acid biosynthesis; L-threonine biosynthesis; L-threonine from L-aspartate: step 4/5. In terms of biological role, catalyzes the ATP-dependent phosphorylation of L-homoserine to L-homoserine phosphate. The protein is Homoserine kinase of Prochlorococcus marinus (strain SARG / CCMP1375 / SS120).